A 281-amino-acid chain; its full sequence is Gas vesicle protein L1 (281 aa).

The protein belongs to the gas vesicle GvpF/GvpL family. In terms of assembly, may form oligomers. GvpF to GvpM interact with each other in vitro, and may form multi-subunit complex(es). Interacts with GvpC1, GvpN1 and GvpO1.

The protein resides in the gas vesicle. It is found in the cytoplasm. Its function is as follows. Proteins GvpF to GvpM might be involved in nucleating gas vesicle formation. A minor component of the gas vesicle. This the only minor gas vesicle protein that binds all the others (including GvpC1, GvpN1 and GvpO1, but not GvpA1), suggesting it might be able to assemble them. Gas vesicles are hollow, gas filled proteinaceous nanostructures found in several microbial planktonic microorganisms. They allow positioning of halobacteria at the optimal depth for growth in the poorly aerated, shallow brine pools of their habitat. Functionally, expression of a 9.5 kb p-vac DNA fragment containing 2 divergently transcribed regions (gvpD-gvpE-gvpF-gvpG-gvpH-gvpI-gvpJ-gvpK-gvpL-gvpM and gvpA-gvpC-gvpN-gvpO) allows H.volcanii to produce gas vesicles. A minimal gas vesicle can be made in H.volcanii by gvpA1-gvpO1 plus gvpF1-gvpG1-gvpJ1-gvpK1-gvpL1-gvpM1; lack of enough GvpJ1 prevents their formation. A similar region restores gas vesicle production in H.halobium without the p-vac locus, but it still has the c-vac locus. The chain is Gas vesicle protein L1 (gvpL11) from Halobacterium salinarum (strain ATCC 700922 / JCM 11081 / NRC-1) (Halobacterium halobium).